The chain runs to 118 residues: UPF0342 protein LCK_01004 (118 aa).

Belongs to the UPF0342 family.

This is UPF0342 protein LCK_01004 from Leuconostoc citreum (strain KM20).